The sequence spans 386 residues: Lycopene beta-cyclase (386 aa).

3 to 33 serves as a coordination point for NAD(+); the sequence is DLILVGGGLANGLIAWRLRQRYPQLNLLLIE.

Belongs to the lycopene cyclase family. It depends on FAD as a cofactor.

The enzyme catalyses a carotenoid psi-end group = a carotenoid beta-end derivative. It catalyses the reaction all-trans-lycopene = gamma-carotene. It carries out the reaction gamma-carotene = all-trans-beta-carotene. It functions in the pathway carotenoid biosynthesis; beta-carotene biosynthesis. Its function is as follows. Catalyzes the double cyclization reaction which converts lycopene to beta-carotene. The chain is Lycopene beta-cyclase from Pseudescherichia vulneris (Escherichia vulneris).